Here is a 693-residue protein sequence, read N- to C-terminus: Cyclin-dependent kinase G-1 (693 aa).

The segment covering 1–10 (MAAGSHGGYR) has biased composition (gly residues). Disordered stretches follow at residues 1–148 (MAAG…ARDP) and 236–308 (KKKK…DDYP). The span at 13-24 (EVAREREHDVGV) shows a compositional bias: basic and acidic residues. Positions 26-39 (RRSKEHYHHRHPSR) are enriched in basic residues. Basic and acidic residues-rich tracts occupy residues 40 to 54 (HRDS…RSGG), 75 to 87 (RPSE…REPG), and 97 to 122 (RSGE…EEAK). A compositionally biased stretch (low complexity) spans 268-284 (SVRSSSRSSDSGVLQGS). Residues 287-304 (RDLEVEKGDNIDVEKAAD) are compositionally biased toward basic and acidic residues. The 292-residue stretch at 349-640 (FERLNTINEG…AEDALNHEWF (292 aa)) folds into the Protein kinase domain. ATP contacts are provided by residues 355 to 363 (INEGTYGVV) and K378. The residue at position 359 (T359) is a Phosphothreonine. Y360 is modified (phosphotyrosine). D473 functions as the Proton acceptor in the catalytic mechanism. A Phosphoserine modification is found at S500. T506 carries the phosphothreonine modification. The segment at 664-693 (RFKKHMKSPDPLEEQWMKEQGNNGDRGLFG) is disordered.

This sequence belongs to the protein kinase superfamily. CMGC Ser/Thr protein kinase family. CDC2/CDKX subfamily.

It catalyses the reaction L-seryl-[protein] + ATP = O-phospho-L-seryl-[protein] + ADP + H(+). The enzyme catalyses L-threonyl-[protein] + ATP = O-phospho-L-threonyl-[protein] + ADP + H(+). The catalysed reaction is [DNA-directed RNA polymerase] + ATP = phospho-[DNA-directed RNA polymerase] + ADP + H(+). This chain is Cyclin-dependent kinase G-1 (CDKG-1), found in Oryza sativa subsp. indica (Rice).